Reading from the N-terminus, the 1435-residue chain is MGARASVLSGGKLDRWEKIRLRPGGKKKYKLKHIVWASRELERFAVNPGLLETSEGCRQILGQLQPSLQTGSEECRSLYNTVATLYCVHQRIEIKDTKEALDKIKEEQNKSKKKAQQAAADTGHSSQVSQNYPIVQNIQGQMVHQAISPRTLNAWVKVVEEKAFSPEVIPMFSALSEGATPQDLNTMLNTVGGHQAAMQMLKETINEEAAEWDRVHPVHAGPIAPGQMREPRGSDIAGTTSTLQEQIGWMTNNPPIPVGEIYKRWIILGLNKIVRMYSPTSILDIRQGPKEPFRDYVDRFYKTLRAEQASQEVKNWMTETLLVQNANPDCKTILKALGPAATLEEMMTACQGVGGPGHKARVLAEAMSQVTNSATIMMQRGNFRNQRKIVKCFNCGKEGHIARNCRAPRKKGCWKCGKEGHQMKDCTERQANFFREDLAFLQGKAREFSSEQTRANSPTRRELQVWGRDNNSPSEAGADRQGTVSFNFPQITLWQRPLVTIKIGGQLKEALLDTGADDTVLEEMSLPGRWKPKMIGGIGGFIKVRQYDQILIEICGHKAIGTVLVGPTPVNIIGRNLLTQIGCTLNFPISPIETVPVKLKPGMDGPKVKQWPLTEEKIKALVEICTEMEKEGKISKIGPENPYNTPVFAIKKKDSTKWRKLVDFRELNKRTQDFWEVQLGIPHPAGLKKKKSVTVLDVGDAYFSVPLDEDFRKYTAFTIPSINNETPGIRYQYNVLPQGWKGSPAIFQSSMTKILEPFRKQNPDIVIYQYMDDLYVGSDLEIGQHRTKIEELRQHLLRWGLTTPDKKHQKEPPFLWMGYELHPDKWTVQPIVLPEKDSWTVNDIQKLVGKLNWASQIYPGIKVRQLCKLLRGTKALTEVIPLTEEAELELAENREILKEPVHGVYYDPSKDLIAEIQKQGQGQWTYQIYQEPFKNLKTGKYARMRGTHTNDVKQLTEAVQKITTESIVIWGKTPKFKLPIQKETWETWWTEYWQATWIPEWEFVNTPPLVKLWYQLEKEPIVGAETFYVDGAANRETKLGKAGYVTNKGRQKVVPLTNTTNQKTELQAIYLALQDSGLEVNIVTDSQYALGIIQAQPDKSESELVNQIIEQLIKKEKVYLAWVPAHKGIGGNEQVDKLVSAGIRKILFLDGIDKAQDEHEKYHSNWRAMASDFNLPPVVAKEIVASCDKCQLKGEAMHGQVDCSPGIWQLDCTHLEGKVILVAVHVASGYIEAEVIPAETGQETAYFLLKLAGRWPVKTIHTDNGSNFTSATVKAACWWAGIKQEFGIPYNPQSQGVVESMNKELKKIIGQVRDQAEHLKTAVQMAVFIHNFKRKGGIGGYSAGERIVDIIATDIQTKELQKQITKIQNFRVYYRDSRNPLWKGPAKLLWKGEGAVVIQDNSDIKVVPRRKAKIIRDYGKQMAGDDCVASRQDED.

Glycine 2 carries N-myristoyl glycine; by host lipidation. Residues 7–31 (VLSGGKLDRWEKIRLRPGGKKKYKL) are interaction with Gp41. The interaction with host CALM1 stretch occupies residues 8–43 (LSGGKLDRWEKIRLRPGGKKKYKLKHIVWASRELER). Residues 12-19 (KLDRWEKI) form an interaction with host AP3D1 region. The interaction with membrane phosphatidylinositol 4,5-bisphosphate and RNA stretch occupies residues 14 to 33 (DRWEKIRLRPGGKKKYKLKH). The Nuclear export signal signature appears at 16 to 22 (WEKIRLR). The Nuclear localization signal motif lies at 26–32 (KKKYKLK). Positions 73–77 (EECRS) are interaction with membrane phosphatidylinositol 4,5-bisphosphate. Positions 107–128 (EQNKSKKKAQQAAADTGHSSQV) are disordered. Tyrosine 132 carries the phosphotyrosine; by host modification. The segment at 189–227 (NTVGGHQAAMQMLKETINEEAAEWDRVHPVHAGPIAPGQ) is interaction with human PPIA/CYPA and NUP153. A dimerization/Multimerization of capsid protein p24 region spans residues 277-363 (YSPTSILDIR…GGPGHKARVL (87 aa)). CCHC-type zinc fingers lie at residues 390-407 (VKCFNCGKEGHIARNCRA) and 411-428 (KGCWKCGKEGHQMKDCTE). The segment at 449 to 481 (SSEQTRANSPTRRELQVWGRDNNSPSEAGADRQ) is disordered. The tract at residues 489–493 (PQITL) is dimerization of protease. One can recognise a Peptidase A2 domain in the interval 508–577 (KEALLDTGAD…TPVNIIGRNL (70 aa)). Aspartate 513 functions as the For protease activity; shared with dimeric partner in the catalytic mechanism. Dimerization of protease regions lie at residues 537-543 (GIGGFIK) and 576-588 (NLLTQIGCTLNFP). Residues 631 to 821 (EGKISKIGPE…PPFLWMGYEL (191 aa)) form the Reverse transcriptase domain. Positions 697, 772, and 773 each coordinate Mg(2+). The tract at residues 814-822 (FLWMGYELH) is RT 'primer grip'. Residues 985–1001 (WETWWTEYWQATWIPEW) carry the Tryptophan repeat motif motif. The 124-residue stretch at 1021–1144 (IVGAETFYVD…VDKLVSAGIR (124 aa)) folds into the RNase H type-1 domain. Aspartate 1030, glutamate 1065, aspartate 1085, and aspartate 1136 together coordinate Mg(2+). The segment at 1150-1191 (DGIDKAQDEHEKYHSNWRAMASDFNLPPVVAKEIVASCDKCQ) adopts an Integrase-type zinc-finger fold. Zn(2+) is bound by residues histidine 1159, histidine 1163, cysteine 1187, and cysteine 1190. The 151-residue stretch at 1201 to 1351 (VDCSPGIWQL…SAGERIVDII (151 aa)) folds into the Integrase catalytic domain. Residues aspartate 1211, aspartate 1263, and glutamate 1299 each coordinate Mg(2+). Residues 1370–1417 (FRVYYRDSRNPLWKGPAKLLWKGEGAVVIQDNSDIKVVPRRKAKIIRD) constitute a DNA-binding region (integrase-type).

Homotrimer; further assembles as hexamers of trimers. Interacts with gp41 (via C-terminus). Interacts with host CALM1; this interaction induces a conformational change in the Matrix protein, triggering exposure of the myristate group. Interacts with host AP3D1; this interaction allows the polyprotein trafficking to multivesicular bodies during virus assembly. Part of the pre-integration complex (PIC) which is composed of viral genome, matrix protein, Vpr and integrase. In terms of assembly, homodimer; the homodimer further multimerizes as homohexamers or homopentamers. Interacts with human PPIA/CYPA; This interaction stabilizes the capsid. Interacts with human NUP153. Interacts with host PDZD8; this interaction stabilizes the capsid. Interacts with monkey TRIM5; this interaction destabilizes the capsid. As to quaternary structure, homodimer, whose active site consists of two apposed aspartic acid residues. Heterodimer of p66 RT and p51 RT (RT p66/p51). Heterodimerization of RT is essential for DNA polymerase activity. The overall folding of the subdomains is similar in p66 RT and p51 RT but the spatial arrangements of the subdomains are dramatically different. In terms of assembly, homotetramer; may further associate as a homohexadecamer. Part of the pre-integration complex (PIC) which is composed of viral genome, matrix protein, Vpr and integrase. Interacts with human SMARCB1/INI1 and human PSIP1/LEDGF isoform 1. Interacts with human KPNA3; this interaction might play a role in nuclear import of the pre-integration complex. Interacts with human NUP153; this interaction might play a role in nuclear import of the pre-integration complex. It depends on Mg(2+) as a cofactor. Specific enzymatic cleavages by the viral protease yield mature proteins. The protease is released by autocatalytic cleavage. The polyprotein is cleaved during and after budding, this process is termed maturation. Proteolytic cleavage of p66 RT removes the RNase H domain to yield the p51 RT subunit. Nucleocapsid protein p7 might be further cleaved after virus entry. Post-translationally, tyrosine phosphorylated presumably in the virion by a host kinase. Phosphorylation is apparently not a major regulator of membrane association. In terms of processing, phosphorylated possibly by host MAPK1; this phosphorylation is necessary for Pin1-mediated virion uncoating. Methylated by host PRMT6, impairing its function by reducing RNA annealing and the initiation of reverse transcription.

Its subcellular location is the host cell membrane. The protein resides in the host endosome. It localises to the host multivesicular body. It is found in the virion membrane. The protein localises to the host nucleus. Its subcellular location is the host cytoplasm. The protein resides in the virion. The enzyme catalyses Specific for a P1 residue that is hydrophobic, and P1' variable, but often Pro.. The catalysed reaction is Endohydrolysis of RNA in RNA/DNA hybrids. Three different cleavage modes: 1. sequence-specific internal cleavage of RNA. Human immunodeficiency virus type 1 and Moloney murine leukemia virus enzymes prefer to cleave the RNA strand one nucleotide away from the RNA-DNA junction. 2. RNA 5'-end directed cleavage 13-19 nucleotides from the RNA end. 3. DNA 3'-end directed cleavage 15-20 nucleotides away from the primer terminus.. It carries out the reaction 3'-end directed exonucleolytic cleavage of viral RNA-DNA hybrid.. It catalyses the reaction DNA(n) + a 2'-deoxyribonucleoside 5'-triphosphate = DNA(n+1) + diphosphate. Protease: The viral protease is inhibited by many synthetic protease inhibitors (PIs), such as amprenavir, atazanavir, indinavir, loprinavir, nelfinavir, ritonavir and saquinavir. Use of protease inhibitors in tritherapy regimens permit more ambitious therapeutic strategies. Reverse transcriptase/ribonuclease H: RT can be inhibited either by nucleoside RT inhibitors (NRTIs) or by non nucleoside RT inhibitors (NNRTIs). NRTIs act as chain terminators, whereas NNRTIs inhibit DNA polymerization by binding a small hydrophobic pocket near the RT active site and inducing an allosteric change in this region. Classical NRTIs are abacavir, adefovir (PMEA), didanosine (ddI), lamivudine (3TC), stavudine (d4T), tenofovir (PMPA), zalcitabine (ddC), and zidovudine (AZT). Classical NNRTIs are atevirdine (BHAP U-87201E), delavirdine, efavirenz (DMP-266), emivirine (I-EBU), and nevirapine (BI-RG-587). The tritherapies used as a basic effective treatment of AIDS associate two NRTIs and one NNRTI. Mediates, with Gag polyprotein, the essential events in virion assembly, including binding the plasma membrane, making the protein-protein interactions necessary to create spherical particles, recruiting the viral Env proteins, and packaging the genomic RNA via direct interactions with the RNA packaging sequence (Psi). Gag-Pol polyprotein may regulate its own translation, by the binding genomic RNA in the 5'-UTR. At low concentration, the polyprotein would promote translation, whereas at high concentration, the polyprotein would encapsidate genomic RNA and then shut off translation. Functionally, targets the polyprotein to the plasma membrane via a multipartite membrane-binding signal, that includes its myristoylated N-terminus. Matrix protein is part of the pre-integration complex. Implicated in the release from host cell mediated by Vpu. Binds to RNA. Its function is as follows. Forms the conical core that encapsulates the genomic RNA-nucleocapsid complex in the virion. Most core are conical, with only 7% tubular. The core is constituted by capsid protein hexamer subunits. The core is disassembled soon after virion entry. Host restriction factors such as TRIM5-alpha or TRIMCyp bind retroviral capsids and cause premature capsid disassembly, leading to blocks in reverse transcription. Capsid restriction by TRIM5 is one of the factors which restricts HIV-1 to the human species. Host PIN1 apparently facilitates the virion uncoating. On the other hand, interactions with PDZD8 or CYPA stabilize the capsid. In terms of biological role, encapsulates and protects viral dimeric unspliced genomic RNA (gRNA). Binds these RNAs through its zinc fingers. Acts as a nucleic acid chaperone which is involved in rearangement of nucleic acid secondary structure during gRNA retrotranscription. Also facilitates template switch leading to recombination. As part of the polyprotein, participates in gRNA dimerization, packaging, tRNA incorporation and virion assembly. Aspartyl protease that mediates proteolytic cleavages of Gag and Gag-Pol polyproteins during or shortly after the release of the virion from the plasma membrane. Cleavages take place as an ordered, step-wise cascade to yield mature proteins. This process is called maturation. Displays maximal activity during the budding process just prior to particle release from the cell. Also cleaves Nef and Vif, probably concomitantly with viral structural proteins on maturation of virus particles. Hydrolyzes host EIF4GI and PABP1 in order to shut off the capped cellular mRNA translation. The resulting inhibition of cellular protein synthesis serves to ensure maximal viral gene expression and to evade host immune response. Also mediates cleavage of host YTHDF3. Mediates cleavage of host CARD8, thereby activating the CARD8 inflammasome, leading to the clearance of latent HIV-1 in patient CD4(+) T-cells after viral reactivation; in contrast, HIV-1 can evade CARD8-sensing when its protease remains inactive in infected cells prior to viral budding. Functionally, multifunctional enzyme that converts the viral RNA genome into dsDNA in the cytoplasm, shortly after virus entry into the cell. This enzyme displays a DNA polymerase activity that can copy either DNA or RNA templates, and a ribonuclease H (RNase H) activity that cleaves the RNA strand of RNA-DNA heteroduplexes in a partially processive 3' to 5' endonucleasic mode. Conversion of viral genomic RNA into dsDNA requires many steps. A tRNA(3)-Lys binds to the primer-binding site (PBS) situated at the 5'-end of the viral RNA. RT uses the 3' end of the tRNA primer to perform a short round of RNA-dependent minus-strand DNA synthesis. The reading proceeds through the U5 region and ends after the repeated (R) region which is present at both ends of viral RNA. The portion of the RNA-DNA heteroduplex is digested by the RNase H, resulting in a ssDNA product attached to the tRNA primer. This ssDNA/tRNA hybridizes with the identical R region situated at the 3' end of viral RNA. This template exchange, known as minus-strand DNA strong stop transfer, can be either intra- or intermolecular. RT uses the 3' end of this newly synthesized short ssDNA to perform the RNA-dependent minus-strand DNA synthesis of the whole template. RNase H digests the RNA template except for two polypurine tracts (PPTs) situated at the 5'-end and near the center of the genome. It is not clear if both polymerase and RNase H activities are simultaneous. RNase H probably can proceed both in a polymerase-dependent (RNA cut into small fragments by the same RT performing DNA synthesis) and a polymerase-independent mode (cleavage of remaining RNA fragments by free RTs). Secondly, RT performs DNA-directed plus-strand DNA synthesis using the PPTs that have not been removed by RNase H as primers. PPTs and tRNA primers are then removed by RNase H. The 3' and 5' ssDNA PBS regions hybridize to form a circular dsDNA intermediate. Strand displacement synthesis by RT to the PBS and PPT ends produces a blunt ended, linear dsDNA copy of the viral genome that includes long terminal repeats (LTRs) at both ends. Its function is as follows. Catalyzes viral DNA integration into the host chromosome, by performing a series of DNA cutting and joining reactions. This enzyme activity takes place after virion entry into a cell and reverse transcription of the RNA genome in dsDNA. The first step in the integration process is 3' processing. This step requires a complex comprising the viral genome, matrix protein, Vpr and integrase. This complex is called the pre-integration complex (PIC). The integrase protein removes 2 nucleotides from each 3' end of the viral DNA, leaving recessed CA OH's at the 3' ends. In the second step, the PIC enters cell nucleus. This process is mediated through integrase and Vpr proteins, and allows the virus to infect a non dividing cell. This ability to enter the nucleus is specific of lentiviruses, other retroviruses cannot and rely on cell division to access cell chromosomes. In the third step, termed strand transfer, the integrase protein joins the previously processed 3' ends to the 5' ends of strands of target cellular DNA at the site of integration. The 5'-ends are produced by integrase-catalyzed staggered cuts, 5 bp apart. A Y-shaped, gapped, recombination intermediate results, with the 5'-ends of the viral DNA strands and the 3' ends of target DNA strands remaining unjoined, flanking a gap of 5 bp. The last step is viral DNA integration into host chromosome. This involves host DNA repair synthesis in which the 5 bp gaps between the unjoined strands are filled in and then ligated. Since this process occurs at both cuts flanking the HIV genome, a 5 bp duplication of host DNA is produced at the ends of HIV-1 integration. Alternatively, Integrase may catalyze the excision of viral DNA just after strand transfer, this is termed disintegration. In Human immunodeficiency virus type 1 group M subtype B (isolate LW123) (HIV-1), this protein is Gag-Pol polyprotein (gag-pol).